The following is a 94-amino-acid chain: CRISPR-associated endoribonuclease Cas2 (94 aa).

This sequence belongs to the CRISPR-associated endoribonuclease Cas2 protein family. E.coli-subtype subfamily. Homodimer. Part of the Cas1-Cas2 complex. Forms a hexamer with 2 Cas1 dimers sandwiching a Cas2 dimer. The DNA lies across a flat surface extending from 1 Cas1 dimer, across the Cas2 dimer and contacting the other Cas1 dimer. Only 1 Cas1 protein from each dimer is catalytic, the other interacts with the Cas2 dimer and possibly target DNA.

Functionally, CRISPR (clustered regularly interspaced short palindromic repeat), is an adaptive immune system that provides protection against mobile genetic elements (viruses, transposable elements and conjugative plasmids). CRISPR clusters contain sequences complementary to antecedent mobile elements and target invading nucleic acids. CRISPR clusters are transcribed and processed into CRISPR RNA (crRNA). The Cas1-Cas2 complex is involved in CRISPR adaptation, the first stage of CRISPR immunity, being required for the addition/removal of CRISPR spacers at the leader end of the CRISPR locus. The Cas1-Cas2 complex introduces staggered nicks into both strands of the CRISPR array near the leader repeat and joins the 5'-ends of the repeat strands with the 3'-ends of the new spacer sequence. Spacer DNA integration requires supercoiled target DNA and 3'-OH ends on the inserted (spacer) DNA and probably initiates with a nucleophilic attack of the C 3'-OH end of the protospacer on the minus strand of the first repeat sequence. Expression of Cas1-Cas2 in a strain lacking both genes permits spacer acquisition. Cas2 not seen to bind DNA alone; the Cas1-Cas2 complex preferentially binds CRISPR-locus DNA. Highest binding is seen to a dual forked DNA complex with 3'-overhangs and a protospacer-adjacent motif-complement specifically positioned. The protospacer DNA lies across a flat surface extending from 1 Cas1 dimer, across the Cas2 dimer and contacting the other Cas1 dimer; the 23 bp-long ds section of the DNA is bracketed by 1 Tyr-22 from each of the Cas1 dimers. Cas1 cuts within the 3'-overhang, to generate a 33-nucleotide DNA that is probably incorporated into the CRISPR leader by a cut-and-paste mechanism. This subunit's probable nuclease activity is not required for spacer acquisition. This is CRISPR-associated endoribonuclease Cas2 (ygbF) from Escherichia coli (strain K12).